The sequence spans 160 residues: SsrA-binding protein (160 aa).

The disordered stretch occupies residues 131–160 (KKEYDKRHTERERDSDRELQRAVRSKGKDD).

Belongs to the SmpB family.

It localises to the cytoplasm. Functionally, required for rescue of stalled ribosomes mediated by trans-translation. Binds to transfer-messenger RNA (tmRNA), required for stable association of tmRNA with ribosomes. tmRNA and SmpB together mimic tRNA shape, replacing the anticodon stem-loop with SmpB. tmRNA is encoded by the ssrA gene; the 2 termini fold to resemble tRNA(Ala) and it encodes a 'tag peptide', a short internal open reading frame. During trans-translation Ala-aminoacylated tmRNA acts like a tRNA, entering the A-site of stalled ribosomes, displacing the stalled mRNA. The ribosome then switches to translate the ORF on the tmRNA; the nascent peptide is terminated with the 'tag peptide' encoded by the tmRNA and targeted for degradation. The ribosome is freed to recommence translation, which seems to be the essential function of trans-translation. The chain is SsrA-binding protein from Pseudomonas syringae pv. syringae (strain B728a).